The sequence spans 236 residues: uncharacterized protein (236 aa).

Residues 3-116 enclose the Response regulatory domain; the sequence is TCLIVDDELF…RLSKTLKRVR (114 aa). Position 54 is a 4-aspartylphosphate (Asp-54). Residues 135 to 235 enclose the HTH LytTR-type domain; it reads LPCYSGSKLK…LKSLKQLFGF (101 aa).

This is an uncharacterized protein from Shewanella oneidensis (strain ATCC 700550 / JCM 31522 / CIP 106686 / LMG 19005 / NCIMB 14063 / MR-1).